Consider the following 563-residue polypeptide: Alpha-keto-acid decarboxylase (563 aa).

E59 lines the thiamine diphosphate pocket. The segment at S347–Q367 is disordered. The span at V351–E366 shows a compositional bias: pro residues. The segment at T394–V476 is thiamine pyrophosphate binding. The Mg(2+) site is built by D444, N471, and G473.

This sequence belongs to the TPP enzyme family. It depends on a metal cation as a cofactor. The cofactor is thiamine diphosphate.

In terms of biological role, decarboxylates branched-chain and aromatic alpha-keto acids to aldehydes. The protein is Alpha-keto-acid decarboxylase (kdc) of Mycolicibacterium paratuberculosis (strain ATCC BAA-968 / K-10) (Mycobacterium paratuberculosis).